Reading from the N-terminus, the 482-residue chain is G patch domain-containing protein 2-like (482 aa).

Phosphoserine occurs at positions 31, 86, and 88. Threonine 91 carries the phosphothreonine modification. Residue lysine 196 forms a Glycyl lysine isopeptide (Lys-Gly) (interchain with G-Cter in SUMO2) linkage. Positions glycine 198–serine 214 are enriched in basic and acidic residues. Disordered stretches follow at residues glycine 198–glutamine 247 and lysine 413–serine 482. Low complexity predominate over residues glutamate 220–serine 230. Residues threonine 439–serine 450 are compositionally biased toward polar residues. A phosphoserine mark is found at serine 447 and serine 449. Positions threonine 456–threonine 469 are enriched in low complexity.

The protein is G patch domain-containing protein 2-like (GPATCH2L) of Homo sapiens (Human).